Consider the following 341-residue polypeptide: S-adenosylmethionine:tRNA ribosyltransferase-isomerase (341 aa).

The protein belongs to the QueA family. As to quaternary structure, monomer.

The protein localises to the cytoplasm. The enzyme catalyses 7-aminomethyl-7-carbaguanosine(34) in tRNA + S-adenosyl-L-methionine = epoxyqueuosine(34) in tRNA + adenine + L-methionine + 2 H(+). It functions in the pathway tRNA modification; tRNA-queuosine biosynthesis. Transfers and isomerizes the ribose moiety from AdoMet to the 7-aminomethyl group of 7-deazaguanine (preQ1-tRNA) to give epoxyqueuosine (oQ-tRNA). In Clostridium botulinum (strain Eklund 17B / Type B), this protein is S-adenosylmethionine:tRNA ribosyltransferase-isomerase.